Here is a 1237-residue protein sequence, read N- to C-terminus: Rho guanine nucleotide exchange factor 10-like protein (1237 aa).

2 disordered regions span residues 1–117 (MASS…SSRR) and 132–203 (YDDV…QPKM). Residues 25-45 (EAEDDPGEGFEFDDSDDDEDT) are compositionally biased toward acidic residues. Serine 39 bears the Phosphoserine mark. A phosphotyrosine mark is found at tyrosine 132 and tyrosine 153. 2 stretches are compositionally biased toward basic and acidic residues: residues 146–163 (EAERNQPYEDARQDRAPQ) and 184–194 (EEAKPEAEPTK). Position 241 is a phosphoserine (serine 241). In terms of domain architecture, DH spans 276-463 (VRRHILGSIV…ETLAEKLNEQ (188 aa)). Disordered regions lie at residues 1091–1118 (QEEAEGQQAEEDKPDGPAPEPAPVPASH) and 1142–1164 (PGPLLSVREPEPADGSALEHSEE).

In terms of assembly, interacts with RHOA, RHOB and RHOC.

It is found in the cytoplasm. Acts as a guanine nucleotide exchange factor (GEF) for RHOA, RHOB and RHOC. The chain is Rho guanine nucleotide exchange factor 10-like protein (ARHGEF10L) from Bos taurus (Bovine).